Consider the following 81-residue polypeptide: Photosystem I iron-sulfur center (81 aa).

2 4Fe-4S ferredoxin-type domains span residues 1–31 (MSHT…MVPW) and 37–68 (GQIA…IRVY). 8 residues coordinate [4Fe-4S] cluster: cysteine 11, cysteine 14, cysteine 17, cysteine 21, cysteine 48, cysteine 51, cysteine 54, and cysteine 58.

As to quaternary structure, the cyanobacterial PSI reaction center is composed of one copy each of PsaA,B,C,D,E,F,I,J,K,L,M and X, and forms trimeric complexes. It depends on [4Fe-4S] cluster as a cofactor.

It is found in the cellular thylakoid membrane. It catalyses the reaction reduced [plastocyanin] + hnu + oxidized [2Fe-2S]-[ferredoxin] = oxidized [plastocyanin] + reduced [2Fe-2S]-[ferredoxin]. Functionally, apoprotein for the two 4Fe-4S centers FA and FB of photosystem I (PSI); essential for photochemical activity. FB is the terminal electron acceptor of PSI, donating electrons to ferredoxin. The C-terminus interacts with PsaA/B/D and helps assemble the protein into the PSI complex. Required for binding of PsaD and PsaE to PSI. PSI is a plastocyanin/cytochrome c6-ferredoxin oxidoreductase, converting photonic excitation into a charge separation, which transfers an electron from the donor P700 chlorophyll pair to the spectroscopically characterized acceptors A0, A1, FX, FA and FB in turn. The protein is Photosystem I iron-sulfur center of Acaryochloris marina (strain MBIC 11017).